Reading from the N-terminus, the 753-residue chain is Catalase-peroxidase (753 aa).

A signal peptide spans 1–39; that stretch reads MLPRVNKRSNCIAKKTSNRLISAVSLAIASLCISQSALA. The tryptophyl-tyrosyl-methioninium (Trp-Tyr) (with M-267) cross-link spans 118–241; sequence WHSTGTYRMS…LAAVQMGLIY (124 aa). H119 acts as the Proton acceptor in catalysis. Residues 241–267 constitute a cross-link (tryptophyl-tyrosyl-methioninium (Tyr-Met) (with W-118)); that stretch reads YVNPEGPNGNHDPISAAADIRDVFARM. H282 is a heme b binding site.

This sequence belongs to the peroxidase family. Peroxidase/catalase subfamily. Homodimer or homotetramer. Requires heme b as cofactor. Post-translationally, formation of the three residue Trp-Tyr-Met cross-link is important for the catalase, but not the peroxidase activity of the enzyme.

The enzyme catalyses H2O2 + AH2 = A + 2 H2O. It catalyses the reaction 2 H2O2 = O2 + 2 H2O. Functionally, bifunctional enzyme with both catalase and broad-spectrum peroxidase activity. This chain is Catalase-peroxidase, found in Pseudoalteromonas atlantica (strain T6c / ATCC BAA-1087).